Consider the following 139-residue polypeptide: Protein Turandot B (139 aa).

The first 21 residues, 1 to 21 (MNFNMSMICFALLLIVTLCSA), serve as a signal peptide directing secretion.

Belongs to the Turandot family.

It localises to the secreted. Its function is as follows. A humoral factor that may play a role in stress tolerance. The sequence is that of Protein Turandot B from Drosophila yakuba (Fruit fly).